Here is a 316-residue protein sequence, read N- to C-terminus: Retinol dehydrogenase 12 (316 aa).

46–52 (GANTGIG) lines the NADP(+) pocket. Ser175 provides a ligand contact to substrate. Residue Tyr200 is the Proton acceptor of the active site.

The protein belongs to the short-chain dehydrogenases/reductases (SDR) family. As to expression, expressed in the inner segments of the photoreceptor in retina.

The catalysed reaction is all-trans-retinol + NADP(+) = all-trans-retinal + NADPH + H(+). It catalyses the reaction 11-cis-retinol + NADP(+) = 11-cis-retinal + NADPH + H(+). It carries out the reaction 9-cis-retinol + NADP(+) = 9-cis-retinal + NADPH + H(+). The enzyme catalyses a 4-hydroxynonen-1-ol + NADP(+) = a 4-hydroxynonenal + NADPH + H(+). The catalysed reaction is (E)-non-2-en-1-ol + NADP(+) = (E)-non-2-enal + NADPH + H(+). It catalyses the reaction (Z)-non-6-en-1-ol + NADP(+) = (Z)-non-6-enal + NADPH + H(+). It carries out the reaction nonan-1-ol + NADP(+) = nonanal + NADPH + H(+). The protein operates within cofactor metabolism; retinol metabolism. Its function is as follows. Retinoids dehydrogenase/reductase with a clear preference for NADP. Displays high activity towards 9-cis, 11-cis and all-trans-retinal. Shows very weak activity toward 13-cis-retinol. Also exhibits activity, albeit with lower affinity than for retinaldehydes, towards lipid peroxidation products (C9 aldehydes) such as 4-hydroxynonenal and trans-2-nonenal. Plays an important function in photoreceptor cells to detoxify 4-hydroxynonenal and potentially other toxic aldehyde products resulting from lipid peroxidation. Has no dehydrogenase activity towards steroids. In Mus musculus (Mouse), this protein is Retinol dehydrogenase 12 (Rdh12).